The sequence spans 405 residues: Envelope glycoprotein M (405 aa).

The Intravirion portion of the chain corresponds to Met-1 to Thr-17. The chain crosses the membrane as a helical span at residues Leu-18–Pro-38. Residues Asn-39–Glu-76 lie on the Virion surface side of the membrane. Residues Met-77–Cys-97 traverse the membrane as a helical segment. At Gly-98–Ala-121 the chain is on the intravirion side. Residues Val-122–Ile-142 form a helical membrane-spanning segment. The Virion surface segment spans residues Gln-143–His-149. A helical transmembrane segment spans residues Val-150 to Ala-170. Over Cys-171–Thr-192 the chain is Intravirion. A helical membrane pass occupies residues Phe-193 to Leu-215. Topologically, residues Glu-216–Asn-245 are virion surface. The chain crosses the membrane as a helical span at residues Leu-246–Leu-266. Arg-267 is a topological domain (intravirion). The chain crosses the membrane as a helical span at residues His-268–Val-288. The Virion surface portion of the chain corresponds to Arg-289–Leu-299. A helical transmembrane segment spans residues His-300–Ile-320. Topologically, residues Arg-321–Pro-405 are intravirion. Residues Leu-346–Pro-405 form a disordered region. The segment covering Gln-386–Thr-397 has biased composition (polar residues).

The protein belongs to the herpesviridae glycoprotein M family. In terms of assembly, interacts (via N-terminus) with gN (via N-terminus). The gM-gN heterodimer forms the gCII complex.

The protein resides in the virion membrane. The protein localises to the host Golgi apparatus. It is found in the host trans-Golgi network. Its subcellular location is the host endosome membrane. It localises to the host nucleus inner membrane. Functionally, envelope glycoprotein important for virion assembly and egress. Plays a role in the correct incorporation of gH-gL into virion membrane. Directs the glycoprotein N (gN) to the host trans-Golgi network. The sequence is that of Envelope glycoprotein M from Epstein-Barr virus (strain B95-8) (HHV-4).